The following is a 618-amino-acid chain: C2H2 finger domain transcription factor sebA (618 aa).

Positions 394–488 (GDATQSTEEM…RGRKQSLTDD (95 aa)) are disordered. The span at 406–416 (KKRVTSRRSLK) shows a compositional bias: basic residues. 2 stretches are compositionally biased toward low complexity: residues 417-432 (KAST…AKKT) and 443-458 (SDTT…SSRQ). The segment covering 459-469 (NSTANTSNSES) has biased composition (polar residues). 2 C2H2-type zinc fingers span residues 493–516 (FVCS…RSLH) and 522–544 (FECH…ARTH). The span at 582–597 (NAATSKSTTSESSDGT) shows a compositional bias: low complexity. The segment at 582–618 (NAATSKSTTSESSDGTISDTSSVGGRPAKKRRRDDHV) is disordered. Residues 608–618 (PAKKRRRDDHV) show a composition bias toward basic residues.

It is found in the nucleus. The protein localises to the cytoplasm. Transcription factor that is involved in the response to heat shock, oxidative stress, and poor nutrient conditions. Controls expression of oxidative stress response genes such as ccp1, cat1, cat2, sod2; as well as of heat shock genes such as hsf1, hsp30 and hsp90. Negatively controls the expression of the fumiquinazoline (fmq) cluster via binding to the STRE motifs at the fmqA-D promoters. Plays a role in virulence. The chain is C2H2 finger domain transcription factor sebA from Aspergillus fumigatus (strain ATCC MYA-4609 / CBS 101355 / FGSC A1100 / Af293) (Neosartorya fumigata).